The primary structure comprises 166 residues: Phosphodiesterase MJ0936 (166 aa).

Residues aspartate 8, histidine 10, aspartate 36, asparagine 59, histidine 97, histidine 120, and histidine 122 each coordinate Mn(2+). Ni(2+) is bound by residues aspartate 8, histidine 10, aspartate 36, asparagine 59, histidine 97, histidine 120, and histidine 122.

It belongs to the metallophosphoesterase superfamily. YfcE family. As to quaternary structure, monomer. Ni(2+) serves as cofactor. Mn(2+) is required as a cofactor.

Competitively inhibited by phosphate. Functionally, shows phosphodiesterase activity. Hydrolyzes phosphodiesters bonds in the artificial chromogenic substrates bis-p-nitrophenyl phosphate (bis-pNPP), and less efficiently thymidine 5'-monophosphate p-nitrophenyl ester (pNP-TMP) and p-nitrophenylphosphorylcholine (pNPPC). No catalytic activity was found toward cAMP or cGMP, nucleotides or phospholipase substrates such as phosphatidylcholine. The physiological substrate is unknown. The protein is Phosphodiesterase MJ0936 of Methanocaldococcus jannaschii (strain ATCC 43067 / DSM 2661 / JAL-1 / JCM 10045 / NBRC 100440) (Methanococcus jannaschii).